The sequence spans 54 residues: uncharacterized protein (54 aa).

Residues 6–26 (ILIYLLIFVAGIVIGKIRINV) traverse the membrane as a helical segment.

It localises to the host membrane. This is an uncharacterized protein from Acidianus convivator (ABV).